Reading from the N-terminus, the 24-residue chain is VTSWSLCTPGCTSPGGGSNCSFCC.

Thr2 bears the (E)-2,3-didehydrobutyrine mark. The lanthionine (Ser-Cys) cross-link spans 3–7 (SWSLC). The residue at position 4 (Trp4) is a 6'-chlorotryptophan. Residue Ser5 is modified to 2,3-didehydroalanine (Ser). The segment at residues 8 to 11 (TPGC) is a cross-link (beta-methyllanthionine (Thr-Cys)). Cross-links (lanthionine (Ser-Cys)) lie at residues 13–20 (SPGGGSNC) and 18–23 (SNCSFC). 3,4-dihydroxyproline; in form A1 is present on Pro14. 4-hydroxyproline; in form A2 is present on Pro14. Positions 21–24 (SFCC) form a cross-link, S-(2-aminovinyl)-D-cysteine (Ser-Cys).

This sequence belongs to the type A lantibiotic family. In terms of processing, maturation of lantibiotics involves the enzymatic conversion of Thr, and Ser into dehydrated AA and the formation of thioether bonds with cysteine. The C-terminal lanthionine undergoes decarboxylation. This is followed by membrane translocation and cleavage of the modified precursor. Occurs in 2 forms, A1 contains 3,4-dihydroxyproline at Pro-14, A2 contains 4-hydroxyproline at Pro-14. The patent report does not provide the stereochemistry of the modified prolines. Post-translationally, the patent report does not describe whether the 2,3-didehydrobutyrine is the E- or Z-isomer. In several diagrams it is shown as the E-isomer.

Functionally, lanthionine-containing peptide antibiotic (lantibiotic) active on Gram-positive bacteria. The bactericidal activity of lantibiotics is based on depolarization of energized bacterial cytoplasmic membranes, initiated by the formation of aqueous transmembrane pores. The protein is Lantibiotic 107891 of Microbispora sp. (strain 107891).